The sequence spans 856 residues: V-type proton ATPase 116 kDa subunit a 2 (856 aa).

The Cytoplasmic segment spans residues 1-393 (MGSLFRSESM…DAYGVGSYRE (393 aa)). Residues 394–412 (VNPALFTIITFPFLFAVMF) traverse the membrane as a helical segment. The Vacuolar segment spans residues 413–414 (GD). The chain crosses the membrane as a helical span at residues 415-431 (FGHGFVMFLFALLLVLN). Over 432–445 (ENHPRLSQSQEILR) the chain is Cytoplasmic. A helical transmembrane segment spans residues 446–475 (MFFDGRYILLLMGLFSVYTGLIYNDCFSKS). The Vacuolar segment spans residues 476 to 549 (VNLFGSGWNV…ATNRLTFLNS (74 aa)). A helical membrane pass occupies residues 550-569 (FKMKMSVILGIFHMTFGVVL). Over 570–587 (GIFNHLHFRKKFNVYLVS) the chain is Cytoplasmic. Residues 588–608 (VPEILFMLCIFGYLIFMIIYK) traverse the membrane as a helical segment. Residues 609 to 651 (WLAYSAETSREAPSILIEFINMFLFPTSKTHGLYPGQAHVQRV) are Vacuolar-facing. A helical membrane pass occupies residues 652-671 (LVALTVLAVPVLFLGKPLFL). Over 672-739 (LWLHNGRNCF…EILMTQAIHS (68 aa)) the chain is Cytoplasmic. Ser-695 and Ser-700 each carry phosphoserine. The helical transmembrane segment at 740–764 (IEYCLGCISNTASYLRLWALSLAHA) threads the bilayer. Over 765–785 (QLSDVLWAMLMRVGLRVDTTY) the chain is Vacuolar. The helical transmembrane segment at 786-824 (GVLLLLPVMAFFAVLTIFILLVMEGLSAFLHAIRLHWVE) threads the bilayer. Over 825–856 (FQNKFYVGAGTKFVPFSFSLLSSKFSNDDSIA) the chain is Cytoplasmic.

This sequence belongs to the V-ATPase 116 kDa subunit family. In terms of assembly, V-ATPase is a heteromultimeric enzyme made up of two complexes: the ATP-hydrolytic V1 complex and the proton translocation V0 complex. The V1 complex consists of three catalytic AB heterodimers that form a heterohexamer, three peripheral stalks each consisting of EG heterodimers, one central rotor including subunits D and F, and the regulatory subunits C and H. The proton translocation complex V0 consists of the proton transport subunit a, a ring of proteolipid subunits c9c'', rotary subunit d, subunits e and f, and the accessory subunits ATP6AP1/Ac45 and ATP6AP2/PRR. Directly interacts with PSCD2 through its N-terminal cytosolic tail in an intra-endosomal acidification-dependent manner. Disruption of this interaction results in the inhibition of endocytosis. Interacts with SPAAR. Relatively high expression in kidney and liver. Lower levels in the spleen, testis, and skeletal muscle. Also expressed in the thymus.

It is found in the cell membrane. The protein localises to the endosome membrane. Its function is as follows. Subunit of the V0 complex of vacuolar(H+)-ATPase (V-ATPase), a multisubunit enzyme composed of a peripheral complex (V1) that hydrolyzes ATP and a membrane integral complex (V0) that translocates protons. V-ATPase is responsible for acidifying and maintaining the pH of intracellular compartments and in some cell types, is targeted to the plasma membrane, where it is responsible for acidifying the extracellular environment. Essential component of the endosomal pH-sensing machinery. May play a role in maintaining the Golgi functions, such as glycosylation maturation, by controlling the Golgi pH. In aerobic conditions, involved in intracellular iron homeostasis, thus triggering the activity of Fe(2+) prolyl hydroxylase (PHD) enzymes, and leading to HIF1A hydroxylation and subsequent proteasomal degradation. This Mus musculus (Mouse) protein is V-type proton ATPase 116 kDa subunit a 2 (Atp6v0a2).